A 604-amino-acid chain; its full sequence is Threonine--tRNA ligase (604 aa).

The tract at residues 210–501 (DHRKIGTEME…LTEHYAGEFP (292 aa)) is catalytic. Zn(2+) contacts are provided by C302, H353, and H478.

Belongs to the class-II aminoacyl-tRNA synthetase family. In terms of assembly, homodimer. The cofactor is Zn(2+).

The protein resides in the cytoplasm. The enzyme catalyses tRNA(Thr) + L-threonine + ATP = L-threonyl-tRNA(Thr) + AMP + diphosphate + H(+). Functionally, catalyzes the attachment of threonine to tRNA(Thr) in a two-step reaction: L-threonine is first activated by ATP to form Thr-AMP and then transferred to the acceptor end of tRNA(Thr). Also edits incorrectly charged L-seryl-tRNA(Thr). The protein is Threonine--tRNA ligase of Sulfurovum sp. (strain NBC37-1).